Reading from the N-terminus, the 94-residue chain is Large ribosomal subunit protein bL25 (94 aa).

The protein belongs to the bacterial ribosomal protein bL25 family. As to quaternary structure, part of the 50S ribosomal subunit; part of the 5S rRNA/L5/L18/L25 subcomplex. Contacts the 5S rRNA. Binds to the 5S rRNA independently of L5 and L18.

This is one of the proteins that binds to the 5S RNA in the ribosome where it forms part of the central protuberance. The chain is Large ribosomal subunit protein bL25 from Yersinia pestis bv. Antiqua (strain Antiqua).